A 155-amino-acid polypeptide reads, in one-letter code: Large-conductance mechanosensitive channel (155 aa).

3 helical membrane passes run 16–36 (VVDM…VNNL), 40–60 (VILP…LYII), and 88–108 (GVFL…FLLV).

This sequence belongs to the MscL family. Homopentamer.

The protein resides in the cell inner membrane. Functionally, channel that opens in response to stretch forces in the membrane lipid bilayer. May participate in the regulation of osmotic pressure changes within the cell. The polypeptide is Large-conductance mechanosensitive channel (Chlorobium chlorochromatii (strain CaD3)).